The chain runs to 233 residues: Small ribosomal subunit protein uS2 (233 aa).

Belongs to the universal ribosomal protein uS2 family.

This Bacillus cytotoxicus (strain DSM 22905 / CIP 110041 / 391-98 / NVH 391-98) protein is Small ribosomal subunit protein uS2.